A 156-amino-acid polypeptide reads, in one-letter code: Small ribosomal subunit protein uS7 (156 aa).

It belongs to the universal ribosomal protein uS7 family. Part of the 30S ribosomal subunit. Contacts proteins S9 and S11.

Functionally, one of the primary rRNA binding proteins, it binds directly to 16S rRNA where it nucleates assembly of the head domain of the 30S subunit. Is located at the subunit interface close to the decoding center, probably blocks exit of the E-site tRNA. The polypeptide is Small ribosomal subunit protein uS7 (Streptococcus equi subsp. equi (strain 4047)).